We begin with the raw amino-acid sequence, 429 residues long: Serine--tRNA ligase (429 aa).

Residue 229–231 (TAE) participates in L-serine binding. 260–262 (RSE) provides a ligand contact to ATP. Glutamate 283 serves as a coordination point for L-serine. Residue 347 to 350 (EISS) participates in ATP binding. Position 383 (serine 383) interacts with L-serine.

This sequence belongs to the class-II aminoacyl-tRNA synthetase family. Type-1 seryl-tRNA synthetase subfamily. Homodimer. The tRNA molecule binds across the dimer.

The protein localises to the cytoplasm. It carries out the reaction tRNA(Ser) + L-serine + ATP = L-seryl-tRNA(Ser) + AMP + diphosphate + H(+). The enzyme catalyses tRNA(Sec) + L-serine + ATP = L-seryl-tRNA(Sec) + AMP + diphosphate + H(+). The protein operates within aminoacyl-tRNA biosynthesis; selenocysteinyl-tRNA(Sec) biosynthesis; L-seryl-tRNA(Sec) from L-serine and tRNA(Sec): step 1/1. In terms of biological role, catalyzes the attachment of serine to tRNA(Ser). Is also able to aminoacylate tRNA(Sec) with serine, to form the misacylated tRNA L-seryl-tRNA(Sec), which will be further converted into selenocysteinyl-tRNA(Sec). The sequence is that of Serine--tRNA ligase from Orientia tsutsugamushi (strain Boryong) (Rickettsia tsutsugamushi).